The chain runs to 206 residues: CASP-like protein 2C1 (206 aa).

Over 1–31 (MSVLGVGPRTVTPHLRKGMMESSSGISLARA) the chain is Cytoplasmic. The chain crosses the membrane as a helical span at residues 32-52 (EAFLRLFAILVLVLTACLLGF). Over 53–71 (DTQTKLLFSTIKKTATFRD) the chain is Extracellular. A helical transmembrane segment spans residues 72-92 (LGALQVVVYVDSVAAGYNLLQ). At 93–111 (LGRGFISAKLKGKLINVSY) the chain is on the cytoplasmic side. A helical transmembrane segment spans residues 112–132 (VTLPWVCFLLDQAAVYTVFSA). The Extracellular segment spans residues 133–161 (NTAALQASIIAVTGESSLQWMKVCNRYTR). The chain crosses the membrane as a helical span at residues 162-182 (FCIQVGGALLSGYLASLLMVL). Residues 183–206 (LSSLSAFSLFRLYSPKQFHLLKPT) lie on the Cytoplasmic side of the membrane.

This sequence belongs to the Casparian strip membrane proteins (CASP) family. Homodimer and heterodimers.

The protein localises to the cell membrane. This Vitis vinifera (Grape) protein is CASP-like protein 2C1.